Consider the following 716-residue polypeptide: Fatty acid oxidation complex subunit alpha (716 aa).

An enoyl-CoA hydratase/isomerase region spans residues 1 to 189 (MIYQSPTIQV…KVGAVDAVVA (189 aa)). Asp296 contacts substrate. The tract at residues 311–716 (KEVKNAAVLG…ATNNGSYYQA (406 aa)) is 3-hydroxyacyl-CoA dehydrogenase. NAD(+)-binding positions include Met324, Asp343, 400 to 402 (VVE), Lys407, and Ser429. His450 functions as the For 3-hydroxyacyl-CoA dehydrogenase activity in the catalytic mechanism. Asn453 is an NAD(+) binding site. Substrate is bound by residues Asn500 and Tyr660.

This sequence in the N-terminal section; belongs to the enoyl-CoA hydratase/isomerase family. It in the C-terminal section; belongs to the 3-hydroxyacyl-CoA dehydrogenase family. Heterotetramer of two alpha chains (FadB) and two beta chains (FadA).

The enzyme catalyses a (3S)-3-hydroxyacyl-CoA + NAD(+) = a 3-oxoacyl-CoA + NADH + H(+). It carries out the reaction a (3S)-3-hydroxyacyl-CoA = a (2E)-enoyl-CoA + H2O. It catalyses the reaction a 4-saturated-(3S)-3-hydroxyacyl-CoA = a (3E)-enoyl-CoA + H2O. The catalysed reaction is (3S)-3-hydroxybutanoyl-CoA = (3R)-3-hydroxybutanoyl-CoA. The enzyme catalyses a (3Z)-enoyl-CoA = a 4-saturated (2E)-enoyl-CoA. It carries out the reaction a (3E)-enoyl-CoA = a 4-saturated (2E)-enoyl-CoA. It functions in the pathway lipid metabolism; fatty acid beta-oxidation. Its function is as follows. Involved in the aerobic and anaerobic degradation of long-chain fatty acids via beta-oxidation cycle. Catalyzes the formation of 3-oxoacyl-CoA from enoyl-CoA via L-3-hydroxyacyl-CoA. It can also use D-3-hydroxyacyl-CoA and cis-3-enoyl-CoA as substrate. In Shewanella putrefaciens (strain CN-32 / ATCC BAA-453), this protein is Fatty acid oxidation complex subunit alpha.